The following is a 497-amino-acid chain: Angiopoietin-1 (497 aa).

The signal sequence occupies residues 1-19 (MTVFLSFAFFAAILTHIGC). Residues 81–119 (QKLQHLEHVMENYTQWLQKLENYIVENMKSEMAQIQQNA) adopt a coiled-coil conformation. N-linked (GlcNAc...) asparagine glycosylation is found at Asn-92, Asn-122, Asn-154, Asn-243, and Asn-294. Residues 153-261 (LNQTSRLEIQ…LELMDTVHNL (109 aa)) adopt a coiled-coil conformation. In terms of domain architecture, Fibrinogen C-terminal spans 276-496 (REEEKPFRDC…STTMMIRPLD (221 aa)). Disulfide bonds link Cys-285-Cys-314 and Cys-438-Cys-451.

Homooligomer. Interacts with TEK/TIE2. Interacts with SVEP1/polydom. Interacts with THBD; this interaction significantly inhibits the generation of activated PC and TAFIa/CPB2 by the thrombin/thrombomodulin complex.

The protein resides in the secreted. Its function is as follows. Binds and activates TIE2 receptor by inducing its tyrosine phosphorylation. Implicated in endothelial developmental processes later and distinct from that of VEGF. Appears to play a crucial role in mediating reciprocal interactions between the endothelium and surrounding matrix and mesenchyme. Mediates blood vessel maturation/stability. It may play an important role in the heart early development. The polypeptide is Angiopoietin-1 (Angpt1) (Rattus norvegicus (Rat)).